Here is a 1269-residue protein sequence, read N- to C-terminus: Protein flightless-1 homolog (1269 aa).

M1 carries the post-translational modification N-acetylmethionine. The tract at residues 1-427 is interaction with LRRFIP1 and LRRFIP2; that stretch reads MEATGVLPFV…SGPKDPMARK (427 aa). LRR repeat units follow at residues 7–32, 33–55, 56–78, 80–103, 104–126, 127–149, 150–173, 175–196, 197–222, 223–245, 247–268, 269–291, 293–316, 318–339, 340–363, and 365–385; these read LPFV…VKAM, TSLR…LAAL, QKLE…LSSL, SLRA…IFKL, DDLS…LENA, KNML…LFIN, LTDL…MRRL, HLQT…QLPA, MTAL…LEGL, SNLA…LYTL, SLRR…IDQW, VHVE…ICKL, KLKK…IGKL, NLEE…LCRC, PKLR…HFLT, and IEVL…PADR. K21 is modified (N6-acetyllysine). S406 bears the Phosphoserine mark. Phosphoserine; by SGK3 is present on S436. A disordered region spans residues 452–473; the sequence is VAQEKNKKQEESADARAPSGKV. Basic and acidic residues predominate over residues 453 to 465; it reads AQEKNKKQEESAD. The interaction with ACTL6A stretch occupies residues 495–827; that stretch reads VGQLPGLTIW…TVSRSLEGTE (333 aa). Gelsolin-like repeat units follow at residues 509-591, 629-703, and 758-831; these read FVPV…EEFL, NIKL…PEFW, and ELMP…AQVF. The residue at position 818 (T818) is a Phosphothreonine; by SGK3. S856 and S860 each carry phosphoserine. Positions 951-975 are disordered; sequence KKEDKEEKAEGKEGEEATAEAEEKQ. Over residues 952-965 the composition is skewed to basic and acidic residues; the sequence is KEDKEEKAEGKEGE. Over residues 966–975 the composition is skewed to acidic residues; the sequence is EATAEAEEKQ. 2 Gelsolin-like repeats span residues 1075 to 1143 and 1181 to 1254; these read TDSS…PENF and KCSD…QHAF.

In terms of assembly, interacts with actin, ACTL6A, NCOA2 and CARM1. Interacts with LRRFIP1, LRRFIP2 and MYD88. Upon LPS stimulation, LRRFIP2 competes for MYD88-binding. LRRFIP1 constitutively blocks the interaction with MyD88, even in the absence of LPS. Interacts with the nuclear receptors ESR1 and THRB. Interacts with SGK3. Interacts (via the gelsolin-like region) with TMOD1. Interacts with (via the gelsolin-like region) TMOD3. Interacts with LMOD2, VCL, GSN and DES. In terms of tissue distribution, strongest expression in skeletal muscle with high expression also in the heart and lung.

It is found in the nucleus. The protein localises to the cytoplasm. It localises to the cytoskeleton. Its subcellular location is the microtubule organizing center. The protein resides in the centrosome. It is found in the cell projection. The protein localises to the podosome. It localises to the cell junction. Its subcellular location is the focal adhesion. Is a regulator of actin polymerization, required for proper myofibril organization and regulation of the length of sarcomeric thin filaments. It also plays a role in the assembly of cardiomyocyte cell adhesion complexes. Regulates cytoskeletal rearrangements involved in cytokinesis and cell migration, by inhibiting Rac1-dependent paxillin phosphorylation. May play a role as coactivator in transcriptional activation by hormone-activated nuclear receptors (NR) and acts in cooperation with NCOA2 and CARM1. Involved in estrogen hormone signaling. This chain is Protein flightless-1 homolog (FLII), found in Homo sapiens (Human).